Consider the following 427-residue polypeptide: Lupus La protein homolog B (427 aa).

Residues 6 to 98 (DKEQLDLDTK…RRSPAKPLPE (93 aa)) form the HTH La-type RNA-binding domain. The region spanning 110–202 (RSVYIKGFPT…EERKLNKSEE (93 aa)) is the RRM domain. Disordered stretches follow at residues 193-220 (EERK…AEDA) and 319-427 (EGKQ…VGDQ). A xRRM domain is found at 226-348 (EERVGCLLKF…KGRGGKGNDS (123 aa)). Residues 315–331 (KKIMEGKQESFNKRKGR) carry the Nuclear localization signal motif. 2 stretches are compositionally biased toward basic residues: residues 327 to 342 (KRKG…KGRG) and 351 to 360 (RKKIQFQGKK). Acidic residues predominate over residues 365 to 376 (SSDDEDDMEESE). Basic and acidic residues predominate over residues 405-427 (RALDDKAEDGPAVKQSKTEVGDQ).

In terms of processing, phosphorylated.

It is found in the nucleus. La protein plays a role in the transcription of RNA polymerase III. It is most probably a transcription termination factor. Binds to the 3' termini of virtually all nascent polymerase III transcripts. This is Lupus La protein homolog B (ssb-b) from Xenopus laevis (African clawed frog).